The chain runs to 235 residues: Phosphoribosylaminoimidazole-succinocarboxamide synthase (235 aa).

The protein belongs to the SAICAR synthetase family.

It catalyses the reaction 5-amino-1-(5-phospho-D-ribosyl)imidazole-4-carboxylate + L-aspartate + ATP = (2S)-2-[5-amino-1-(5-phospho-beta-D-ribosyl)imidazole-4-carboxamido]succinate + ADP + phosphate + 2 H(+). Its pathway is purine metabolism; IMP biosynthesis via de novo pathway; 5-amino-1-(5-phospho-D-ribosyl)imidazole-4-carboxamide from 5-amino-1-(5-phospho-D-ribosyl)imidazole-4-carboxylate: step 1/2. The protein is Phosphoribosylaminoimidazole-succinocarboxamide synthase of Chloroherpeton thalassium (strain ATCC 35110 / GB-78).